Here is a 900-residue protein sequence, read N- to C-terminus: Isoleucine--tRNA ligase (900 aa).

The short motif at 59-69 (PYANGNIHMGH) is the 'HIGH' region element. Glutamate 550 is an L-isoleucyl-5'-AMP binding site. Residues 591-595 (KMSKS) carry the 'KMSKS' region motif. Lysine 594 serves as a coordination point for ATP. Cysteine 876, cysteine 879, cysteine 892, and cysteine 895 together coordinate Zn(2+).

The protein belongs to the class-I aminoacyl-tRNA synthetase family. IleS type 1 subfamily. As to quaternary structure, monomer. Zn(2+) is required as a cofactor.

The protein resides in the cytoplasm. The enzyme catalyses tRNA(Ile) + L-isoleucine + ATP = L-isoleucyl-tRNA(Ile) + AMP + diphosphate. Functionally, catalyzes the attachment of isoleucine to tRNA(Ile). As IleRS can inadvertently accommodate and process structurally similar amino acids such as valine, to avoid such errors it has two additional distinct tRNA(Ile)-dependent editing activities. One activity is designated as 'pretransfer' editing and involves the hydrolysis of activated Val-AMP. The other activity is designated 'posttransfer' editing and involves deacylation of mischarged Val-tRNA(Ile). The polypeptide is Isoleucine--tRNA ligase (Onion yellows phytoplasma (strain OY-M)).